Reading from the N-terminus, the 219-residue chain is Transmembrane emp24 domain-containing protein 10 (219 aa).

The N-terminal stretch at 1–31 (MSGLSGPLSWPGPLLSALLFLFLLGPSSVLG) is a signal peptide. Residues 1–142 (MSGLSGPLSW…KNYEEIAKVE (142 aa)) are required for interaction with STX17. At 32–185 (ISFHLPVNSR…RDTNESTNTR (154 aa)) the chain is on the lumenal side. Residues 41 to 193 (RKCLREEIHK…TRVLYFSIFS (153 aa)) form the GOLD domain. Residues 147–178 (LEVELRRLEDLSESIVNDFAYMKKREEEMRDT) form a required for TMED10 and TMED2 cis-Golgi network localization region. A dimethylated arginine mark is found at arginine 171 and arginine 176. The N-linked (GlcNAc...) asparagine glycan is linked to asparagine 179. Residues 186–206 (VLYFSIFSMFCLIGLATWQVF) form a helical membrane-spanning segment. Residues 204-219 (QVFYLRRFFKAKKLIE) are interaction with COPG1. The Cytoplasmic segment spans residues 207-219 (YLRRFFKAKKLIE). The segment at 207–219 (YLRRFFKAKKLIE) is interaction with ARF1 and IL1B. The COPII vesicle coat-binding motif lies at 211–212 (FF). The COPI vesicle coat-binding motif lies at 211 to 219 (FFKAKKLIE).

This sequence belongs to the EMP24/GP25L family. In terms of assembly, predominantly dimeric and to a lesser extent monomeric in the ER. Monomer and dimer in ERGIC and cis-Golgi network. Forms homooligomer (via GOLD domain); the assembly is promoted by direct binding with leaderless cargos and may form a protein channel that facilitates cargo entry into the ERGIC. Forms heterooligomeric complexes with other members of the p24 family such as TMED2, TMED7 and TMED9. Interacts (via GOLD domain) with TMED2 (via GOLD domain); the complex is required for export of TMED10 from the ER to the cis-Golgi network; the complex is proposed to be involved in cis-Golgi network dynamics and / or biogenesis. Associates with the COPI vesicle coat subunits (coatomer). Tetramerization of the cytoplasmic domain at the Golgi membrane in vitro; the complex is proposed to interact with COPI coatomer and induce budding of the vesicles. Interacts with COPG1; the interaction involves TMED10 homodimer. Interacts with ARF1 (GDP-bound); the interaction probably involves a TMED10 oligomer. Interacts with SEC23A, SEC24B, SEC24C and SEC24D components of the coat protein complex II/COPII, indicative of an association of TMED10 with the COPII vesicle coat. Interacts with CD59. Interacts with MPPE1/PGAP5; the complex might recruit and sort GPI-anchored proteins to the ER-exit site, or the interaction might lead to recycling of PGAP5 between the ER and the Golgi. Interacts with F2LR1/PAR2. Interacts with KDELR2/ERD2; the interaction is disrupted by KDELR2 ligand. Found in a complex composed at least of SURF4, TMED2 and TMED10. Associates with the presenilin-dependent gamma-secretase complex. Interacts with STX17; the interaction is direct. Interacts with IL-1; the interaction is direct. Interacts with RAB21 (active GTP-bound form); the interaction is indirect and regulates TMED10 abundance and localization at the Golgi. As to expression, ubiquitous.

Its subcellular location is the endoplasmic reticulum membrane. The protein localises to the endoplasmic reticulum-Golgi intermediate compartment membrane. It localises to the golgi apparatus membrane. It is found in the golgi apparatus. The protein resides in the cis-Golgi network membrane. Its subcellular location is the trans-Golgi network membrane. The protein localises to the cytoplasmic vesicle. It localises to the secretory vesicle membrane. It is found in the cell membrane. The protein resides in the melanosome. Functionally, cargo receptor involved in protein vesicular trafficking and quality control in the endoplasmic reticulum (ER) and Golgi. The p24 protein family is a group of transmembrane proteins that bind coat protein complex I/COPI and coat protein complex II/COPII involved in vesicular trafficking between the membranes. Acts at the lumenal side for incorporation of secretory cargo molecules into transport vesicles and involved in vesicle coat formation at the cytoplasmic side. Mainly functions in the early secretory pathway and cycles between the ER, ER-Golgi intermediate compartment (ERGIC) and Golgi, mediating cargo transport through COPI and COPII-coated vesicles. In COPII vesicle-mediated anterograde transport, involved in the transport of GPI-anchored proteins by acting together with TMED2 as their cargo receptor; the function specifically implies SEC24C and SEC24D of the COPII vesicle coat and lipid raft-like microdomains of the ER. Recognizes GPI anchors structural remodeled in the ER by the GPI inositol-deacylase/PGAP1 and the metallophosphoesterase MPPE1/PGAP5. In COPI vesicle-mediated retrograde transport, involved in the biogenesis of COPI vesicles and vesicle coat recruitment. Involved in trafficking of amyloid beta A4 protein and soluble APP-beta release (independent from the modulation of gamma-secretase activity). Involved in the KDELR2-mediated retrograde transport of the toxin A subunit (CTX-A-K63)together with COPI and the COOH terminus of KDELR2. On Golgi membranes, acts as a primary receptor for ARF1-GDP, a GTP-binding protein involved in COPI-vesicle formation. Increases coatomer-dependent GTPase-activating activity of ARFGAP2 which mediates the hydrolysis of ARF1-bound GTP and therefore modulates protein trafficking from the Golgi apparatus. Involved in the exocytic trafficking of G protein-coupled receptors F2LR1/PAR2 (trypsin and tryspin-like enzyme receptor), OPRM1 (opioid receptor) and P2RY4 (UTD and UDP receptor) from the Golgi to the plasma membrane, thus contributing to receptor resensitization. In addition to its cargo receptor activity, may also act as a protein channel after oligomerization, facilitating the post-translational entry of leaderless cytoplasmic cargo into the ERGIC. Involved in the translocation into ERGIC, the vesicle entry and the secretion of leaderless cargos (lacking the secretion signal sequence), including the mature form of interleukin 1/IL-1 family members, the alpha-crystallin B chain HSPB5, the carbohydrate-binding proteins galectin-1/LGALS1 and galectin-3/LGALS3, the microtubule-associated protein Tau/MAPT, and the annexin A1/ANXA1; the translocation process is dependent on cargo protein unfolding and enhanced by chaperones HSP90AB1 and HSP90B1/GRP9. Could also associates with the presenilin-dependent gamma-secretase complex in order to regulate gamma-cleavages of the amyloid beta A4 protein to yield amyloid-beta 40/Abeta40. This Rattus norvegicus (Rat) protein is Transmembrane emp24 domain-containing protein 10.